The following is a 381-amino-acid chain: MSKGVEIFYKGQKAFLNILSLWPQIERRWRIIHQVNYVHVIVFWVLLFDLLLVLHVMANLSYMSEVVKAIFILATSAGHTTKLLSIKANNVQMEELFRRLDNEEFRPRGANEELIFAAACERSRKLRDFYGALSFAALSMILIPQFALDWSHLPLKTYNPLGENTGSPAYWLLYCYQCLALSVSCITNIGFDSLCSSLFIFLKCQLDILAVRLDKIGRLITTSGGTVEQQLKENIRYHMTIVELSKTVERLLCKPISVQIFCSVLVLTANFYAIAVLSDERLELFKYVTYQACMLIQIFILCYYAGEVTQRSLDLPHELYKTSWVDWDYRSRRIALLFMQRLHSTLRIRTLNPSLGFDLMLFSSIVNCSYSYFALLKRVNS.

Residues 1-37 (MSKGVEIFYKGQKAFLNILSLWPQIERRWRIIHQVNY) lie on the Cytoplasmic side of the membrane. Residues 38 to 58 (VHVIVFWVLLFDLLLVLHVMA) traverse the membrane as a helical segment. The N-linked (GlcNAc...) asparagine glycan is linked to Asn-59. Topologically, residues 59–65 (NLSYMSE) are extracellular. Residues 66 to 86 (VVKAIFILATSAGHTTKLLSI) traverse the membrane as a helical segment. The Cytoplasmic segment spans residues 87–127 (KANNVQMEELFRRLDNEEFRPRGANEELIFAAACERSRKLR). A helical membrane pass occupies residues 128–148 (DFYGALSFAALSMILIPQFAL). At 149 to 170 (DWSHLPLKTYNPLGENTGSPAY) the chain is on the extracellular side. Residues 171–191 (WLLYCYQCLALSVSCITNIGF) traverse the membrane as a helical segment. Residues 192 to 255 (DSLCSSLFIF…KTVERLLCKP (64 aa)) lie on the Cytoplasmic side of the membrane. Residues 256–276 (ISVQIFCSVLVLTANFYAIAV) traverse the membrane as a helical segment. Residues 277 to 287 (LSDERLELFKY) are Extracellular-facing. The helical transmembrane segment at 288-308 (VTYQACMLIQIFILCYYAGEV) threads the bilayer. The Cytoplasmic portion of the chain corresponds to 309–355 (TQRSLDLPHELYKTSWVDWDYRSRRIALLFMQRLHSTLRIRTLNPSL). A helical transmembrane segment spans residues 356–376 (GFDLMLFSSIVNCSYSYFALL). Topologically, residues 377-381 (KRVNS) are extracellular.

It belongs to the insect chemoreceptor superfamily. Heteromeric odorant receptor channel (TC 1.A.69) family. Or2a subfamily. As to quaternary structure, interacts with Orco. Complexes exist early in the endomembrane system in olfactory sensory neurons (OSNs), coupling these complexes to the conserved ciliary trafficking pathway. As to expression, isoform A is expressed in a subset of 17 olfactory receptor neurons in the maxillary palp.

The protein localises to the cell membrane. Odorant receptor which mediates acceptance or avoidance behavior, depending on its substrates. The odorant receptor repertoire encodes a large collection of odor stimuli that vary widely in identity, intensity, and duration. May form a complex with Orco to form odorant-sensing units, providing sensitive and prolonged odorant signaling and calcium permeability. The protein is Odorant receptor 46a, isoform A (Or46a) of Drosophila melanogaster (Fruit fly).